Reading from the N-terminus, the 296-residue chain is 3-methyl-2-oxobutanoate hydroxymethyltransferase (296 aa).

The segment covering 1-14 has biased composition (low complexity); the sequence is MTAPTPTPANAATP. The interval 1 to 29 is disordered; the sequence is MTAPTPTPANAATPYGTLPPASPLPQRRP. 2 residues coordinate Mg(2+): Asp71 and Asp114. 3-methyl-2-oxobutanoate is bound by residues 71–72, Asp114, and Lys143; that span reads DS. Glu145 lines the Mg(2+) pocket. The active-site Proton acceptor is Glu212.

Belongs to the PanB family. In terms of assembly, homodecamer; pentamer of dimers. The cofactor is Mg(2+).

It localises to the cytoplasm. It carries out the reaction 3-methyl-2-oxobutanoate + (6R)-5,10-methylene-5,6,7,8-tetrahydrofolate + H2O = 2-dehydropantoate + (6S)-5,6,7,8-tetrahydrofolate. It functions in the pathway cofactor biosynthesis; (R)-pantothenate biosynthesis; (R)-pantoate from 3-methyl-2-oxobutanoate: step 1/2. In terms of biological role, catalyzes the reversible reaction in which hydroxymethyl group from 5,10-methylenetetrahydrofolate is transferred onto alpha-ketoisovalerate to form ketopantoate. The protein is 3-methyl-2-oxobutanoate hydroxymethyltransferase of Paracidovorax citrulli (strain AAC00-1) (Acidovorax citrulli).